The following is a 156-amino-acid chain: ATP synthase subunit b (156 aa).

Residues 3–23 form a helical membrane-spanning segment; sequence ITLTIFAQALAFAGLIWIVAT.

It belongs to the ATPase B chain family. In terms of assembly, F-type ATPases have 2 components, F(1) - the catalytic core - and F(0) - the membrane proton channel. F(1) has five subunits: alpha(3), beta(3), gamma(1), delta(1), epsilon(1). F(0) has three main subunits: a(1), b(2) and c(10-14). The alpha and beta chains form an alternating ring which encloses part of the gamma chain. F(1) is attached to F(0) by a central stalk formed by the gamma and epsilon chains, while a peripheral stalk is formed by the delta and b chains.

It localises to the cell inner membrane. Its function is as follows. F(1)F(0) ATP synthase produces ATP from ADP in the presence of a proton or sodium gradient. F-type ATPases consist of two structural domains, F(1) containing the extramembraneous catalytic core and F(0) containing the membrane proton channel, linked together by a central stalk and a peripheral stalk. During catalysis, ATP synthesis in the catalytic domain of F(1) is coupled via a rotary mechanism of the central stalk subunits to proton translocation. Functionally, component of the F(0) channel, it forms part of the peripheral stalk, linking F(1) to F(0). The sequence is that of ATP synthase subunit b from Xanthomonas oryzae pv. oryzae (strain MAFF 311018).